We begin with the raw amino-acid sequence, 38 residues long: Non-specific lipid-transfer protein P2 (38 aa).

Belongs to the plant LTP family.

It is found in the secreted. Its function is as follows. Plant non-specific lipid-transfer proteins transfer phospholipids as well as galactolipids across membranes. May play a role in wax or cutin deposition in the cell walls of expanding epidermal cells and certain secretory tissues. The polypeptide is Non-specific lipid-transfer protein P2 (Vitis sp. (Grape)).